The chain runs to 125 residues: UPF0251 protein Dhaf_1981 (125 aa).

Belongs to the UPF0251 family.

The protein is UPF0251 protein Dhaf_1981 of Desulfitobacterium hafniense (strain DSM 10664 / DCB-2).